A 4481-amino-acid chain; its full sequence is Dynein axonemal heavy chain 17 (4481 aa).

Residues 1–1792 are stem; it reads MPDLRIDYLE…FANICDAQIK (1792 aa). One copy of the Kelch 1 repeat lies at 521–569; the sequence is LLYMCGGLLERPLILVEVVPRYSVMLEMFNTELDNAKLMYDAQMAASAD. Residues 759-826 are a coiled coil; it reads ENVMEYIQEM…GRVANLNKRY (68 aa). 2 TPR repeats span residues 1533–1566 and 1688–1722; these read VVEATNKPDLYNKLENLKMSLAVCEKALAEYLET and IWWTTEVGLAFARLEEGYENAIKDYNKKQISQLNA. AAA regions lie at residues 1793 to 2014, 2074 to 2295, 2401 to 2649, and 2747 to 2996; these read YSYE…VLVV, KIIK…IGFK, ELDP…IFQG, and SYNE…ERRY. ATP is bound by residues 1831–1838 and 2112–2119; these read GPAGTGKT and GNAGSGKS. The Kelch 2 repeat unit spans residues 2229 to 2275; it reads ISHLRTATPATVSRAGILYINPADLGWNPVVSSWIERRKVQSEKANL. ATP contacts are provided by residues 2439–2446 and 2785–2792; these read GNAGTGKS and GVGGSGKQ. Residues 2782-2834 form a Kelch 3 repeat; that stretch reads LLVGVGGSGKQSLSRLAAYISALDVFQITLKKGYAIPDLKMDLATQYIKSAVK. 2 coiled-coil regions span residues 3011 to 3071 and 3241 to 3293; these read YQNL…IQVV and DVAP…EKIK. Positions 3011 to 3297 are stalk; it reads YQNLLAKKRM…TAEKIKCQQE (287 aa). AAA stretches follow at residues 3389-3616 and 3826-4059; these read LTDD…EIEE and VKNF…VLYN. Residues 4138-4173 form a TPR 3 repeat; the sequence is PESPYLYGLHPNAEIGFLTVTSEKLFRTVLEMQPKE. 2 Kelch repeats span residues 4272–4321 and 4339–4385; these read NLGL…DLLQ and VWLA…DMTA.

This sequence belongs to the dynein heavy chain family. Consists of at least two heavy chains and a number of intermediate and light chains.

It localises to the cytoplasm. The protein localises to the cytoskeleton. Its subcellular location is the flagellum axoneme. In terms of biological role, force generating protein component of the outer dynein arms (ODAs) in the sperm flagellum. Produces force towards the minus ends of microtubules. Dynein has ATPase activity; the force-producing power stroke is thought to occur on release of ADP. Plays a major role in sperm motility, implicated in sperm flagellar assembly and beating. The protein is Dynein axonemal heavy chain 17 of Mus musculus (Mouse).